Here is a 288-residue protein sequence, read N- to C-terminus: NAD(P)H quinone oxidoreductase YCP4 (288 aa).

A Flavodoxin-like domain is found at 3–192; the sequence is IAIIQYSTYG…EIAEKQGEAF (190 aa). FMN is bound by residues 9-13 and 110-164; these read STYGH and VFVS…SPYG. The disordered stretch occupies residues 202–288; sequence GSKKTNTTTT…KSSCSKCIIM (87 aa). Low complexity predominate over residues 205–254; the sequence is KTNTTTTSKSAATSDAAGTTSGTAAGTSAATGAATGTSAPKESTKEASSS. Polar residues predominate over residues 261-288; it reads NGTATRTQQSTKAPETAEKSSCSKCIIM.

Belongs to the WrbA family. FMN serves as cofactor.

The protein localises to the cell membrane. The catalysed reaction is a quinone + NADH + H(+) = a quinol + NAD(+). The enzyme catalyses a quinone + NADPH + H(+) = a quinol + NADP(+). Its function is as follows. Flavodoxin-like protein (FLP) that plays a role in cell wall integrity, oxidative stress protection and virulence. FLPs act as NAD(P)H quinone oxidoreductases. Reduces ubiquinone (coenzyme Q), enabling it to serve as an antioxidant in the membrane. The protein is NAD(P)H quinone oxidoreductase YCP4 of Candida albicans (strain SC5314 / ATCC MYA-2876) (Yeast).